Reading from the N-terminus, the 195-residue chain is Interferon tau-1 (195 aa).

The first 23 residues, 1 to 23 (MAFVLSLLMALVLVSYGPGGSLG), serve as a signal peptide directing secretion. Cystine bridges form between cysteine 24–cysteine 122 and cysteine 52–cysteine 162.

It belongs to the alpha/beta interferon family. IFN-alphaII subfamily. As to expression, constitutively and exclusively expressed in the mononuclear cells of the extraembryonic trophectoderm.

The protein resides in the secreted. Its function is as follows. Paracrine hormone primarily responsible for maternal recognition of pregnancy. Interacts with endometrial receptors, probably type I interferon receptors, and blocks estrogen receptor expression, preventing the estrogen-induced increase in oxytocin receptor expression in the endometrium. This results in the suppression of the pulsatile endometrial release of the luteolytic hormone prostaglandin F2-alpha, hindering the regression of the corpus luteum (luteolysis) and therefore a return to ovarian cyclicity. This, and a possible direct effect of IFN-tau on prostaglandin synthesis, leads in turn to continued ovarian progesterone secretion, which stimulates the secretion by the endometrium of the nutrients required for the growth of the conceptus. In summary, displays particularly high antiviral and antiproliferative potency concurrently with particular weak cytotoxicity, high antiluteolytic activity and immunomodulatory properties. In contrast with other IFNs, IFN-tau is not virally inducible. This chain is Interferon tau-1 (IFNT1), found in Ovis aries (Sheep).